The following is a 1286-amino-acid chain: MLCLEKLVAVLLKTQRTSDAYKKGPWKSQRYTVSGSRVAYKRLNCDDIWARKKSRRIPMVPGGTYSPMPESQPLEDSPKALPVLGEQSNSDNDINEPVFIWGISDKAAQRKSISAGEGSFRLQQEKQQPLVHRPGRGKGRLRLPHRLPFKDRHFTCSKIIGRRFACFAQRLSYRRKQSQCDLLNESTGHLPATCSSAASKSLSWNYCSKMTQQMQNLHLSQSKKHSAPSSPNAAKRLYRNLSEKLKGSHSSFDEAYFRTRTDRLSLRKTSVNFQGNEAMFEAVEQQDLDAVQLLLYQYTPEELDLNTPNSEGLTPLDIAIMTNNVPIARILLRTGARESPHFVSLESRAMHLNTLVQEAQDRVSELSAQVENEGFTLDNTEKEKQLKAWEWRYRLYRRMKTGFEHARAPEVPANACLMVSSSTSLTVSFQEPLSVNAAVVTRYKVEWSMSKDFSPLAGEIIMDNLQTLRCTITGLTTGQQYFVQVSAYNMKGWGPAQTTTPVCASPSNWKDYDDREPRHKGQSEVLESLLQQVRALHQHYSCRESSKLQTTGRKQSVSRSLKHLFHSSNKFVKTLKRGLYIATIFYYKDNMLVTNEDQIPIVEIDDSHTSSITQDFLWFMKLSCMWEDIRWLRQSVPISMSSSTVLQTRQKMLAATAQLQNLLGTHNLGRLYYEPIKDRHGNILIVTIREVEMLYSFFNGKWMQISKLQSQRKSLSTPEEPTALDILLITIQDILSYHKRSHQRLSPGLYLGYLKLCSSVDQIKVLVTQKLPNILCHVKIRENHNISKEEWEWIQKLSGSESMESVDHNADCPMQLFFYELQMAVAALLKQINIPRHQARNFRLYTQEVLEIGHNVSFLLLLPASDDVCTAPGQNNPYTPHSGFLNLPLQMFELVHFCSYREKFISLYCRLSAVVELDSLNTQQSLREAISDSEVAAAKQRHQQVLDFIQQIDEVWREMRWIMDALQYARYKQPVSGLPITKLIDSSSEQNLKKISSTSSHIDCLPSTSPSPEMHRRKAVSESQPCSDEEGCSEVFLPTDSDYDSSDALSPRDLDLVYLSSHDIAQQALSGLSGSAPDVLQVHDMKASMGPGQDPQGPGQGPDTDHSCVEFLHSLTLTGLAPKNHAKMVAGTRPPLGFLGKRKPGKHQHYGGFSRHHRWLRMHSETQSLSLSEGVYTQHLSQACGLAEDPGEAEGPGPVVDGPRGLPLAHAASLPEERRSCLQDPRRPLQRVYVEPYSDTLAGQDPKLWTSLSPTPAGRSSLPSSTSSEMSPDPTSPVSEILSSML.

2 ANK repeats span residues 274–303 (QGNEAMFEAVEQQDLDAVQLLLYQYTPEEL) and 311–340 (EGLTPLDIAIMTNNVPIARILLRTGARESP). A Fibronectin type-III domain is found at 411-507 (VPANACLMVS…TTTPVCASPS (97 aa)). The highly conserved peptide sequence stretch occupies residues 748 to 755 (GLYLGYLK). Over residues 999–1011 (SSHIDCLPSTSPS) the composition is skewed to polar residues. 4 disordered regions span residues 999–1032 (SSHIDCLPSTSPSPEMHRRKAVSESQPCSDEEGC), 1086–1106 (KASMGPGQDPQGPGQGPDTDH), 1187–1207 (AEDPGEAEGPGPVVDGPRGLP), and 1242–1286 (AGQD…SSML). Residues 1260-1277 (SSLPSSTSSEMSPDPTSP) are compositionally biased toward low complexity.

Expressed in both the suprachiasmatic nucleus and dorsal medial hypothalamus.

May play a role in neuronal function. The polypeptide is Ankyrin-repeat and fibronectin type III domain-containing 1 (Mus musculus (Mouse)).